The following is a 339-amino-acid chain: DNA-directed RNA polymerase RPB7 homolog (339 aa).

Belongs to the Asfivirus DNA-directed RNA polymerase RPB7 homolog family. In terms of assembly, part of the viral DNA-directed RNA polymerase that consists of 8 polII-like subunits (RPB1, RPB2, RPB3, RPB5, RPB6, RPB7, RPB9, RPB10), a capping enzyme and a termination factor.

Its subcellular location is the host cytoplasm. The protein resides in the virion. Component of the DNA-directed RNA polymerase (RNAP) that catalyzes the transcription in the cytoplasm of viral DNA into RNA using the four ribonucleoside triphosphates as substrates. This is DNA-directed RNA polymerase RPB7 homolog from Ornithodoros (relapsing fever ticks).